A 401-amino-acid chain; its full sequence is Imidazolonepropionase (401 aa).

2 residues coordinate Fe(3+): H66 and H68. 2 residues coordinate Zn(2+): H66 and H68. Residues R75, Y138, and H171 each coordinate 4-imidazolone-5-propanoate. Position 138 (Y138) interacts with N-formimidoyl-L-glutamate. Residue H236 coordinates Fe(3+). Position 236 (H236) interacts with Zn(2+). Q239 serves as a coordination point for 4-imidazolone-5-propanoate. Residue D311 participates in Fe(3+) binding. Zn(2+) is bound at residue D311. Residues N313 and G315 each contribute to the N-formimidoyl-L-glutamate site. 4-imidazolone-5-propanoate is bound at residue T316.

The protein belongs to the metallo-dependent hydrolases superfamily. HutI family. It depends on Zn(2+) as a cofactor. Fe(3+) is required as a cofactor.

It is found in the cytoplasm. The catalysed reaction is 4-imidazolone-5-propanoate + H2O = N-formimidoyl-L-glutamate. Its pathway is amino-acid degradation; L-histidine degradation into L-glutamate; N-formimidoyl-L-glutamate from L-histidine: step 3/3. Its function is as follows. Catalyzes the hydrolytic cleavage of the carbon-nitrogen bond in imidazolone-5-propanoate to yield N-formimidoyl-L-glutamate. It is the third step in the universal histidine degradation pathway. The protein is Imidazolonepropionase of Pseudomonas fluorescens (strain ATCC BAA-477 / NRRL B-23932 / Pf-5).